The chain runs to 694 residues: Elongation factor G (694 aa).

The tr-type G domain maps to 8 to 287 (EDYRNFGIMA…AVVSYLPSPI (280 aa)). GTP is bound by residues 17-24 (AHIDAGKT), 86-90 (DTPGH), and 140-143 (NKMD).

The protein belongs to the TRAFAC class translation factor GTPase superfamily. Classic translation factor GTPase family. EF-G/EF-2 subfamily.

The protein localises to the cytoplasm. In terms of biological role, catalyzes the GTP-dependent ribosomal translocation step during translation elongation. During this step, the ribosome changes from the pre-translocational (PRE) to the post-translocational (POST) state as the newly formed A-site-bound peptidyl-tRNA and P-site-bound deacylated tRNA move to the P and E sites, respectively. Catalyzes the coordinated movement of the two tRNA molecules, the mRNA and conformational changes in the ribosome. This chain is Elongation factor G, found in Bartonella tribocorum (strain CIP 105476 / IBS 506).